The chain runs to 397 residues: Iron-sulfur cluster assembly SufBD family protein Rv1462 (397 aa).

Thr2 bears the N-acetylthreonine mark.

Belongs to the iron-sulfur cluster assembly SufBD family.

This Mycobacterium tuberculosis (strain ATCC 25618 / H37Rv) protein is Iron-sulfur cluster assembly SufBD family protein Rv1462.